A 1181-amino-acid polypeptide reads, in one-letter code: Lysine-specific demethylase hairless (1181 aa).

Residues 311–323 (TPRCPSPGPPTPP) are compositionally biased toward pro residues. Disordered stretches follow at residues 311–378 (TPRC…HTKL), 413–472 (AGSP…DGRI), and 509–543 (SHSQ…PEAS). Positions 347-357 (SPEGSSSGPGE) are enriched in low complexity. Positions 447–461 (TPETSTGSKAEAQQQ) are enriched in polar residues. The span at 462–472 (EEQRGPRDGRI) shows a compositional bias: basic and acidic residues. The short motif at 560 to 564 (LCRLL) is the LXXLL motif 1 element. Residues 594–619 (CSRCHHGLFNTHWRCSHCSHRLCVAC) form a C6-type zinc finger. The interval 696–745 (GDGGQQKEPTEKTPPAPQLSCNGDSNRTKDIKEETPDSTESPAEDRAGRS) is disordered. Basic and acidic residues predominate over residues 721 to 730 (NRTKDIKEET). Residues 752 to 756 (LCELL) carry the LXXLL motif 2 motif. The JmjC domain maps to 938–1149 (DESRVENLAS…LSAQLCHQGA (212 aa)). The Fe cation site is built by cysteine 999, glutamate 1001, and histidine 1117.

Requires Fe(2+) as cofactor.

The protein localises to the nucleus. It carries out the reaction N(6),N(6)-dimethyl-L-lysyl(9)-[histone H3] + 2 2-oxoglutarate + 2 O2 = L-lysyl(9)-[histone H3] + 2 formaldehyde + 2 succinate + 2 CO2. Functionally, histone demethylase that specifically demethylates both mono- and dimethylated 'Lys-9' of histone H3. May act as a transcription regulator controlling hair biology (via targeting of collagens), neural activity, and cell cycle. In Rattus norvegicus (Rat), this protein is Lysine-specific demethylase hairless (Hr).